The chain runs to 505 residues: uncharacterized protein (505 aa).

Polar residues predominate over residues 1 to 16 (MPPTASLTRSPPTASQ). Positions 1 to 474 (MPPTASLTRS…TPPTASLTRT (474 aa)) are disordered. Low complexity-rich tracts occupy residues 17 to 33 (TRTLPRASRTRTPPRAS) and 40 to 59 (TASLRRTPSRASRTRTPPRA). Residues 66–78 (SRASLTRTLSRAS) are compositionally biased toward polar residues. Composition is skewed to low complexity over residues 96-122 (SLTRTPPTASRTRSLPRASRTRTPPRT), 129-140 (PRTSQTRTPPRA), and 147-158 (SRASRTRTPPRA). Polar residues-rich tracts occupy residues 165-177 (SRASLTRTPSRAS) and 188-200 (TRTPSRASLTRTP). A compositionally biased stretch (low complexity) spans 201 to 226 (PTASLTRASRTRTPPRTSQTRTPPRA). Composition is skewed to polar residues over residues 233–254 (SRASLTRTPSRASLTRTPSRAS), 265–293 (TRTPSRASLTRTPPTASLTRTPPTASLTR), 309–329 (LTRTPPTASLTRSPPTASLTR), 345–365 (LTRTPSTASLTRTPSRASLTR), 373–383 (TRTPSRASLTR), 399–408 (LTRSPPTASL), and 435–448 (LTRSPSTASLTRTP). Residues 453 to 474 (LRRTPPRTSLTRTPPTASLTRT) are compositionally biased toward low complexity.

This is an uncharacterized protein from Homo sapiens (Human).